The primary structure comprises 188 residues: Methylamine dehydrogenase light chain (188 aa).

The segment at residues 1 to 57 (MLGNFRFDDMVEKLSRRVAGQTSRRSVIGKLGTAMLGIGLVPLLPVDRRGRVSRANA) is a signal peptide (tat-type signal). 6 disulfide bridges follow: Cys80/Cys145, Cys86/Cys118, Cys93/Cys178, Cys95/Cys143, Cys103/Cys134, and Cys135/Cys166. Trp114 is subject to Tryptophylquinone. The tryptophan tryptophylquinone (Trp-Trp) cross-link spans 114–165 (WVASCYNPTDGQSYLIAYRDCCGYNVSGRCPCLNTEGELPVYRPEFANDIIW).

This sequence belongs to the aromatic amine dehydrogenase light chain family. Heterotetramer of two light and two heavy chains. It depends on tryptophan tryptophylquinone residue as a cofactor. In terms of processing, predicted to be exported by the Tat system. The position of the signal peptide cleavage has not been experimentally proven. Post-translationally, tryptophan tryptophylquinone (TTQ) is formed by oxidation of the indole ring of a tryptophan to form tryptophylquinone followed by covalent cross-linking with another tryptophan residue.

Its subcellular location is the periplasm. The catalysed reaction is 2 oxidized [amicyanin] + methylamine + H2O = 2 reduced [amicyanin] + formaldehyde + NH4(+) + 2 H(+). It participates in one-carbon metabolism; methylamine degradation; formaldehyde from methylamine: step 1/1. Functionally, methylamine dehydrogenase carries out the oxidation of methylamine. Electrons are passed from methylamine dehydrogenase to amicyanin. The sequence is that of Methylamine dehydrogenase light chain (mauA) from Paracoccus denitrificans.